Reading from the N-terminus, the 84-residue chain is Small ribosomal subunit protein uS17 (84 aa).

The protein belongs to the universal ribosomal protein uS17 family. Part of the 30S ribosomal subunit.

One of the primary rRNA binding proteins, it binds specifically to the 5'-end of 16S ribosomal RNA. This Clostridium botulinum (strain Eklund 17B / Type B) protein is Small ribosomal subunit protein uS17.